The sequence spans 265 residues: Mlc titration factor A (265 aa).

The Zn(2+) site is built by His111, His148, His152, and Glu211.

It belongs to the MtfA family. In terms of assembly, interacts with Mlc. Zn(2+) is required as a cofactor.

The protein localises to the cytoplasm. Involved in the modulation of the activity of the glucose-phosphotransferase system (glucose-PTS). Interacts with the transcriptional repressor Mlc, preventing its interaction with DNA and leading to the modulation of expression of genes regulated by Mlc, including ptsG, which encodes the PTS system glucose-specific EIICB component. In terms of biological role, shows zinc-dependent metallopeptidase activity. This Cronobacter sakazakii (strain ATCC BAA-894) (Enterobacter sakazakii) protein is Mlc titration factor A.